A 178-amino-acid polypeptide reads, in one-letter code: MSRIGNKVIVLPAGVELANNDNVVTVKGPKGELTREFSKDIEIRVEGTEVTLHRPNDSKEMKTIHGTTRALLNNMVVGVSEGFKKELEMRGVGYRAQLQGSKLVLAVGKSHPDEVEAPEGITFELPNPTTIVVSGISKEVVGQTAAYVRSLRSPEPYKGKGIRYIGEFVRRKEGKTGK.

This sequence belongs to the universal ribosomal protein uL6 family. In terms of assembly, part of the 50S ribosomal subunit.

Its function is as follows. This protein binds to the 23S rRNA, and is important in its secondary structure. It is located near the subunit interface in the base of the L7/L12 stalk, and near the tRNA binding site of the peptidyltransferase center. In Streptococcus pneumoniae (strain 70585), this protein is Large ribosomal subunit protein uL6.